Reading from the N-terminus, the 152-residue chain is SsrA-binding protein (152 aa).

It belongs to the SmpB family.

It localises to the cytoplasm. Required for rescue of stalled ribosomes mediated by trans-translation. Binds to transfer-messenger RNA (tmRNA), required for stable association of tmRNA with ribosomes. tmRNA and SmpB together mimic tRNA shape, replacing the anticodon stem-loop with SmpB. tmRNA is encoded by the ssrA gene; the 2 termini fold to resemble tRNA(Ala) and it encodes a 'tag peptide', a short internal open reading frame. During trans-translation Ala-aminoacylated tmRNA acts like a tRNA, entering the A-site of stalled ribosomes, displacing the stalled mRNA. The ribosome then switches to translate the ORF on the tmRNA; the nascent peptide is terminated with the 'tag peptide' encoded by the tmRNA and targeted for degradation. The ribosome is freed to recommence translation, which seems to be the essential function of trans-translation. The chain is SsrA-binding protein from Rickettsia prowazekii (strain Madrid E).